The primary structure comprises 157 residues: Cysteine protease Nivulian-2 (157 aa).

This sequence belongs to the intron maturase 2 family. MatK subfamily. In terms of assembly, monomer. In terms of processing, glycosylated. In terms of tissue distribution, accumulates in latex (at protein level).

Inhibited by HgCl(2), iodoacetamide (IAA) and, to a far lesser extent, by SDS, hydrogen peroxide H(1)O(2), KCl, NaCl, ZnCl(2), AgSO(4), CdCl(2), FeCl(3), PMSF, Pepstatin A and EDTA. Repressed moderately by many organic solvents such as diethyl ether, ethy lacetate, acetophenone, butanol, trichloroethylene, tetrahydrofuran, methanol, chloroform and dichloromethane, and, to a lesser extent, by propanol, benzyl alcohol and chlorobenzene. Its function is as follows. Cysteine protease inducing milk clotting by cleaving casein. Exhibits biomedical activities such as wound healing, haemostatic and antibacterial activity, as well as agricultural application in biocontrol process against the infectious management of the root knot nematode Meloidogyne incognita. The chain is Cysteine protease Nivulian-2 from Euphorbia nivulia (Leafy milk hedge).